Here is a 376-residue protein sequence, read N- to C-terminus: Beta-centractin (376 aa).

N-acetylmethionine is present on methionine 1. A 3'-nitrotyrosine modification is found at tyrosine 4.

The protein belongs to the actin family. ARP1 subfamily.

Its subcellular location is the cytoplasm. The protein localises to the cytoskeleton. The protein resides in the microtubule organizing center. It is found in the centrosome. In terms of biological role, component of a multi-subunit complex involved in microtubule based vesicle motility. It is associated with the centrosome. This chain is Beta-centractin (ACTR1B), found in Homo sapiens (Human).